Consider the following 1389-residue polypeptide: uncharacterized protein (1389 aa).

Residues serine 43–aspartate 94 are a coiled coil. The disordered stretch occupies residues histidine 294–arginine 353. 2 stretches are compositionally biased toward low complexity: residues serine 304 to serine 314 and serine 322 to cysteine 335. WD repeat units follow at residues threonine 867 to isoleucine 907, glycine 1017 to glycine 1056, and glycine 1115 to threonine 1156.

The protein localises to the virion. This is an uncharacterized protein from Acanthamoeba polyphaga (Amoeba).